The chain runs to 605 residues: Elongation factor 4 (605 aa).

The tr-type G domain occupies 11-193 (KCIRNFSIIA…QIVTRISPPQ (183 aa)). Residues 23–28 (DHGKST) and 140–143 (NKVD) contribute to the GTP site.

Belongs to the TRAFAC class translation factor GTPase superfamily. Classic translation factor GTPase family. LepA subfamily.

Its subcellular location is the cell membrane. It catalyses the reaction GTP + H2O = GDP + phosphate + H(+). Functionally, required for accurate and efficient protein synthesis under certain stress conditions. May act as a fidelity factor of the translation reaction, by catalyzing a one-codon backward translocation of tRNAs on improperly translocated ribosomes. Back-translocation proceeds from a post-translocation (POST) complex to a pre-translocation (PRE) complex, thus giving elongation factor G a second chance to translocate the tRNAs correctly. Binds to ribosomes in a GTP-dependent manner. The chain is Elongation factor 4 from Aster yellows witches'-broom phytoplasma (strain AYWB).